We begin with the raw amino-acid sequence, 182 residues long: Putative manganese efflux pump MntP 2 (182 aa).

Transmembrane regions (helical) follow at residues 2-22 (IELT…SIAL), 37-57 (AGGF…YLGV), 63-83 (IGGI…LKMI), 104-123 (LLLL…LTLT), 127-149 (LPLW…GGVH), and 162-182 (AEYL…IEHS).

The protein belongs to the MntP (TC 9.B.29) family.

The protein resides in the cell inner membrane. Its function is as follows. Probably functions as a manganese efflux pump. The polypeptide is Putative manganese efflux pump MntP 2 (Wolinella succinogenes (strain ATCC 29543 / DSM 1740 / CCUG 13145 / JCM 31913 / LMG 7466 / NCTC 11488 / FDC 602W) (Vibrio succinogenes)).